The primary structure comprises 227 residues: Zinc finger protein ZAT10 (227 aa).

The C2H2-type 1 zinc-finger motif lies at 80-102 (YKCSVCDKTFSSYQALGGHKASH). The tract at residues 96–128 (GGHKASHRKNLSQTLSGGGDDHSTSSATTTSAV) is disordered. Residues 119-128 (TSSATTTSAV) are compositionally biased toward low complexity. A C2H2-type 2 zinc finger spans residues 136–158 (HVCTICNKSFPSGQALGGHKRCH). The tract at residues 168 to 189 (SSVSNSEGAGSTSHVSSSHRGF) is disordered. A compositionally biased stretch (polar residues) spans 174 to 186 (EGAGSTSHVSSSH).

Expressed in roots, stems and leaves.

It localises to the nucleus. In terms of biological role, transcriptional repressor involved in abiotic stress responses. Can repress the stress responsive genes DREB1A and LTI78. Probably involved in jasmonate (JA) early signaling response. May regulate the expression of the JA biosynthesis gene LOX3 and control the expression of TIFY10A/JAZ1, a key repressor in the JA signaling cascade. This Arabidopsis thaliana (Mouse-ear cress) protein is Zinc finger protein ZAT10 (ZAT10).